The sequence spans 302 residues: Short-chain dehydrogenase/reductase 3 (302 aa).

4 helical membrane-spanning segments follow: residues 9 to 29 (LVVF…GLVL), 170 to 190 (IVCL…DYCT), 195 to 215 (AFAF…VSAT), and 253 to 273 (AVQL…LIIL). Ser175 serves as a coordination point for substrate. Catalysis depends on Tyr188, which acts as the Proton acceptor.

It belongs to the short-chain dehydrogenases/reductases (SDR) family. In terms of tissue distribution, in the retina, expressed in cone but not rod outer segments.

It localises to the membrane. The catalysed reaction is all-trans-retinol + NADP(+) = all-trans-retinal + NADPH + H(+). Functionally, catalyzes the reduction of all-trans-retinal to all-trans-retinol in the presence of NADPH. The chain is Short-chain dehydrogenase/reductase 3 (DHRS3) from Bos taurus (Bovine).